The sequence spans 141 residues: ATP synthase epsilon chain (141 aa).

The protein belongs to the ATPase epsilon chain family. In terms of assembly, F-type ATPases have 2 components, CF(1) - the catalytic core - and CF(0) - the membrane proton channel. CF(1) has five subunits: alpha(3), beta(3), gamma(1), delta(1), epsilon(1). CF(0) has three main subunits: a, b and c.

The protein localises to the cell inner membrane. Functionally, produces ATP from ADP in the presence of a proton gradient across the membrane. In Aromatoleum aromaticum (strain DSM 19018 / LMG 30748 / EbN1) (Azoarcus sp. (strain EbN1)), this protein is ATP synthase epsilon chain.